The following is an 845-amino-acid chain: Aryl hydrocarbon receptor (845 aa).

Residues 1 to 10 (MNSSSASITY) constitute a propeptide that is removed on maturation. The segment covering 1–10 (MNSSSASITY) has biased composition (polar residues). The interval 1–39 (MNSSSASITYASRKRRKPVQKTVKPVPAEGIKSNPSKRH) is disordered. 2 short sequence motifs (nuclear localization signal) span residues 13-16 (RKRR) and 37-42 (KRHRDR). The bHLH domain maps to 27–80 (PAEGIKSNPSKRHRDRLNTELDRLASLLPFPQDVVNKLDKLSVLRLSVSYLRAK). Required for maintaining the overall integrity of the AHR:ARNT heterodimer and its transcriptional activity regions lie at residues 50–82 (LASL…AKSF), 117–125 (LLQALNGFV), and 265–267 (FAI). The Nuclear export signal signature appears at 64-72 (LDKLSVLRL). Residues 110–180 (NLQEGEFLLQ…RQLHWALNPS (71 aa)) form the PAS 1 domain. The PAS 2 domain occupies 274–341 (PSILEIRTKN…CAEYHIRMIK (68 aa)). A PAC domain is found at 347-385 (LIVFRLLTKDNRWTWVQSNARLVYKNGRPDYIIATQRPL). A disordered region spans residues 820-845 (NNTQPTTHLHPSEARPFSDLTSSGFL).

As to quaternary structure, homodimer. Heterodimer; efficient DNA binding requires dimerization with another bHLH protein. Interacts with ARNT; the heterodimer ARNT:AHR binds to core DNA sequence 5'-TGCGTG-3' within the dioxin response element (DRE) of target gene promoters and activates their transcription. Binds MYBBP1A. Interacts with coactivators including SRC-1, RIP140 and NOCA7, and with the corepressor SMRT. Interacts with NEDD8 and IVNS1ABP. Interacts with BMAL1. Interacts with HSP90AB1. Interacts with TIPARP; leading to mono-ADP-ribosylation of AHR and subsequent inhibition of AHR. In terms of processing, mono-ADP-ribosylated, leading to inhibit transcription activator activity of AHR.

Its subcellular location is the cytoplasm. It is found in the nucleus. Its function is as follows. Ligand-activated transcription factor that enables cells to adapt to changing conditions by sensing compounds from the environment, diet, microbiome and cellular metabolism, and which plays important roles in development, immunity and cancer. Upon ligand binding, translocates into the nucleus, where it heterodimerizes with ARNT and induces transcription by binding to xenobiotic response elements (XRE). Regulates a variety of biological processes, including angiogenesis, hematopoiesis, drug and lipid metabolism, cell motility and immune modulation. Xenobiotics can act as ligands: upon xenobiotic-binding, activates the expression of multiple phase I and II xenobiotic chemical metabolizing enzyme genes (such as the CYP1A1 gene). Mediates biochemical and toxic effects of halogenated aromatic hydrocarbons. Next to xenobiotics, natural ligands derived from plants, microbiota, and endogenous metabolism are potent AHR agonists. Tryptophan (Trp) derivatives constitute an important class of endogenous AHR ligands. Acts as a negative regulator of anti-tumor immunity: indoles and kynurenic acid generated by Trp catabolism act as ligand and activate AHR, thereby promoting AHR-driven cancer cell motility and suppressing adaptive immunity. Regulates the circadian clock by inhibiting the basal and circadian expression of the core circadian component PER1. Inhibits PER1 by repressing the CLOCK-BMAL1 heterodimer mediated transcriptional activation of PER1. The heterodimer ARNT:AHR binds to core DNA sequence 5'-TGCGTG-3' within the dioxin response element (DRE) of target gene promoters and activates their transcription. This chain is Aryl hydrocarbon receptor (AHR), found in Delphinapterus leucas (Beluga whale).